A 440-amino-acid chain; its full sequence is Chromosome partition protein MukF (440 aa).

A leucine-zipper region spans residues 208–236 (LSETSGTLRELQDTLDAAGDKLQANLLRI).

The protein belongs to the MukF family. As to quaternary structure, interacts, and probably forms a ternary complex, with MukE and MukB via its C-terminal region. The complex formation is stimulated by calcium or magnesium. It is required for an interaction between MukE and MukB.

It localises to the cytoplasm. It is found in the nucleoid. In terms of biological role, involved in chromosome condensation, segregation and cell cycle progression. May participate in facilitating chromosome segregation by condensation DNA from both sides of a centrally located replisome during cell division. Not required for mini-F plasmid partitioning. Probably acts via its interaction with MukB and MukE. Overexpression results in anucleate cells. It has a calcium binding activity. This Klebsiella pneumoniae (strain 342) protein is Chromosome partition protein MukF.